The primary structure comprises 351 residues: Anthranilate phosphoribosyltransferase (351 aa).

Residues Gly84, 87-88, 95-98, 113-121, and Ala125 contribute to the 5-phospho-alpha-D-ribose 1-diphosphate site; these read GD, NISS, and KHGNRGASS. Gly84 contributes to the anthranilate binding site. Ser97 is a binding site for Mg(2+). Asn116 contacts anthranilate. Arg171 serves as a coordination point for anthranilate. Residues Asp229 and Lys230 each coordinate Mg(2+).

It belongs to the anthranilate phosphoribosyltransferase family. In terms of assembly, homodimer. Mg(2+) is required as a cofactor.

The catalysed reaction is N-(5-phospho-beta-D-ribosyl)anthranilate + diphosphate = 5-phospho-alpha-D-ribose 1-diphosphate + anthranilate. It participates in amino-acid biosynthesis; L-tryptophan biosynthesis; L-tryptophan from chorismate: step 2/5. Its function is as follows. Catalyzes the transfer of the phosphoribosyl group of 5-phosphorylribose-1-pyrophosphate (PRPP) to anthranilate to yield N-(5'-phosphoribosyl)-anthranilate (PRA). This is Anthranilate phosphoribosyltransferase from Clavibacter sepedonicus (Clavibacter michiganensis subsp. sepedonicus).